The chain runs to 323 residues: o-succinylbenzoate synthase (323 aa).

Catalysis depends on K134, which acts as the Proton donor. Mg(2+) contacts are provided by D162, E191, and D214. K236 functions as the Proton acceptor in the catalytic mechanism.

This sequence belongs to the mandelate racemase/muconate lactonizing enzyme family. MenC type 1 subfamily. Requires a divalent metal cation as cofactor.

It catalyses the reaction (1R,6R)-6-hydroxy-2-succinyl-cyclohexa-2,4-diene-1-carboxylate = 2-succinylbenzoate + H2O. Its pathway is quinol/quinone metabolism; 1,4-dihydroxy-2-naphthoate biosynthesis; 1,4-dihydroxy-2-naphthoate from chorismate: step 4/7. The protein operates within quinol/quinone metabolism; menaquinone biosynthesis. Functionally, converts 2-succinyl-6-hydroxy-2,4-cyclohexadiene-1-carboxylate (SHCHC) to 2-succinylbenzoate (OSB). This Pectobacterium atrosepticum (strain SCRI 1043 / ATCC BAA-672) (Erwinia carotovora subsp. atroseptica) protein is o-succinylbenzoate synthase.